The chain runs to 179 residues: MKKNMILFFGILKKLLICILKMEIKCWLTSDIVYFDSELALTVKQFFMKKNNTILDKIAAHCYGLIMQKISQPVTFKNYIYIWRAVLFADCTIKTNKTPDTQNIINLSQNATEEVKIIIDELIDCFKNKNNFKEEEYKPNLDLLNSYIKNIKKFITENKTSKFIFDKDWEILINNIWMN.

The N-terminal stretch at 1 to 26 (MKKNMILFFGILKKLLICILKMEIKC) is a signal peptide.

This is an uncharacterized protein from Acheta domesticus (House cricket).